The chain runs to 760 residues: Serine/threonine-protein kinase dkf-1 (760 aa).

2 Phorbol-ester/DAG-type zinc fingers span residues 103 to 153 (PHVV…GIIV) and 194 to 244 (PHTL…PSNC). A PH domain is found at 316–444 (KNLEGWMIHF…QFIKESLQPP (129 aa)). Residues 464–725 (VLSDKTLGSG…IEKCLEHGWL (262 aa)) enclose the Protein kinase domain. ATP is bound by residues 470–478 (LGSGQFGTV) and Lys-493. Asp-589 functions as the Proton acceptor in the catalytic mechanism. Thr-626 carries the phosphothreonine modification.

This sequence belongs to the protein kinase superfamily. CAMK Ser/Thr protein kinase family. PKD subfamily. Mg(2+) serves as cofactor. Prolonged phosphorylation at Thr-626 results in ubiquitination and degradation.

It localises to the cytoplasm. The protein resides in the membrane. It catalyses the reaction L-seryl-[protein] + ATP = O-phospho-L-seryl-[protein] + ADP + H(+). It carries out the reaction L-threonyl-[protein] + ATP = O-phospho-L-threonyl-[protein] + ADP + H(+). Activated by DAG and phorbol esters. Phorbol-ester/DAG-type domain 1 binds phorbol ester with high affinity and mediates accumulation at the cell periphery. Phorbol-ester/DAG-type domain 2 binds phorbol ester with low affinity but may mediate initial contact, resulting in a conformational change allowing previously occluded domain 1 to anchor the kinase. Phosphorylation on Thr-626 is then also required for activation and may also result in a further conformational change. Its function is as follows. Converts transient diacylglycerol (DAG) signals into prolonged physiological effects, independently of PKC. Role in the regulation of growth and neuromuscular control of movement. Involved in immune response to S.aureus bacterium by activating transcription factor hlh-30 downstream of phospholipase plc-1. The chain is Serine/threonine-protein kinase dkf-1 from Caenorhabditis briggsae.